The following is a 647-amino-acid chain: RalBP1-associated Eps domain-containing protein 2 (647 aa).

An EH 1 domain is found at 21–122; sequence EQQCYSELFA…RTESIKCELP (102 aa). The tract at residues 156–233 is disordered; the sequence is EKNSFKRMDN…PSSEGPGAKP (78 aa). A compositionally biased stretch (basic and acidic residues) spans 158–170; that stretch reads NSFKRMDNEDKQE. Low complexity predominate over residues 221-230; sequence PEGPSSEGPG. A Phosphoserine modification is found at S239. Residues 268-359 form the EH 2 domain; that stretch reads QREYYVNQFR…LQPEYLQAAF (92 aa). One can recognise an EF-hand domain in the interval 301 to 336; sequence LSIPELSYIWELSDADCDGALTLSEFCAAFHLIVAR. The Ca(2+) site is built by D314, D316, D318, and E325. Residues 402–478 are disordered; the sequence is PTQDVTTADD…PRPQKTHSRA (77 aa). T466 bears the Phosphothreonine mark. S480 carries the phosphoserine modification. Residues 492 to 568 form a disordered region; sequence PAANSGLLPP…PENQTTESQE (77 aa). The segment covering 499–510 has biased composition (pro residues); sequence LPPPPALPPRPC. The tract at residues 501 to 647 is interaction with RALBP1; the sequence is PPPALPPRPC…LEQLRPVTVL (147 aa). Over residues 524 to 539 the composition is skewed to polar residues; the sequence is SQLNRAPSQAAESSPT. The segment at 548-647 is interaction with ASAP1; that stretch reads PPSKPIRRKF…LEQLRPVTVL (100 aa). Residues 599-640 adopt a coiled-coil conformation; that stretch reads IQTAIRKNKEANAVLARLNSELQQQLKEVHQERIALENQLEQ.

As to quaternary structure, interacts with EPN1. Interacts with EPS15 AND EPS15L1. Interacts with RALBP1; can form a ternary complex with activated Ral (RALA or RALB). Interacts with ASAP1; the interaction is direct and this complex can bind paxillin. Also forms a ternary complex with RALBP1 and ASAP1. Interacts with GRB2. In terms of processing, tyrosine-phosphorylated upon stimulation of cells with EGF. Phosphorylation on Tyr-residues induces its association with the EGF receptor probably indirectly through an adapter like GRB2.

It localises to the cytoplasm. Involved in ligand-dependent receptor mediated endocytosis of the EGF and insulin receptors as part of the Ral signaling pathway. By controlling growth factor receptors endocytosis may regulate cell survival. Through ASAP1 may regulate cell adhesion and migration. This chain is RalBP1-associated Eps domain-containing protein 2 (Reps2), found in Mus musculus (Mouse).